We begin with the raw amino-acid sequence, 342 residues long: Isopentenyl-diphosphate delta-isomerase (342 aa).

11-12 serves as a coordination point for substrate; the sequence is RK. Residues Ser68, 69 to 71, Ser99, and Asn128 contribute to the FMN site; that span reads SMT. Position 99-101 (99-101) interacts with substrate; sequence SQR. Gln162 provides a ligand contact to substrate. Position 163 (Glu163) interacts with Mg(2+). FMN contacts are provided by residues Lys194, Ser219, Thr224, 275–277, and 296–297; these read GVR and AK.

The protein belongs to the IPP isomerase type 2 family. As to quaternary structure, homooctamer. Dimer of tetramers. FMN serves as cofactor. Requires NADPH as cofactor. Mg(2+) is required as a cofactor.

The protein resides in the cytoplasm. It carries out the reaction isopentenyl diphosphate = dimethylallyl diphosphate. Its function is as follows. Involved in the biosynthesis of isoprenoids. Catalyzes the 1,3-allylic rearrangement of the homoallylic substrate isopentenyl (IPP) to its allylic isomer, dimethylallyl diphosphate (DMAPP). The polypeptide is Isopentenyl-diphosphate delta-isomerase (Legionella pneumophila (strain Corby)).